Here is a 356-residue protein sequence, read N- to C-terminus: UDP-N-acetylglucosamine--N-acetylmuramyl-(pentapeptide) pyrophosphoryl-undecaprenol N-acetylglucosamine transferase (356 aa).

Arg-166, Ser-196, and Gln-290 together coordinate UDP-N-acetyl-alpha-D-glucosamine.

This sequence belongs to the glycosyltransferase 28 family. MurG subfamily.

It localises to the cell membrane. It carries out the reaction Mur2Ac(oyl-L-Ala-gamma-D-Glu-L-Lys-D-Ala-D-Ala)-di-trans,octa-cis-undecaprenyl diphosphate + UDP-N-acetyl-alpha-D-glucosamine = beta-D-GlcNAc-(1-&gt;4)-Mur2Ac(oyl-L-Ala-gamma-D-Glu-L-Lys-D-Ala-D-Ala)-di-trans,octa-cis-undecaprenyl diphosphate + UDP + H(+). It functions in the pathway cell wall biogenesis; peptidoglycan biosynthesis. Cell wall formation. Catalyzes the transfer of a GlcNAc subunit on undecaprenyl-pyrophosphoryl-MurNAc-pentapeptide (lipid intermediate I) to form undecaprenyl-pyrophosphoryl-MurNAc-(pentapeptide)GlcNAc (lipid intermediate II). The polypeptide is UDP-N-acetylglucosamine--N-acetylmuramyl-(pentapeptide) pyrophosphoryl-undecaprenol N-acetylglucosamine transferase (Staphylococcus aureus (strain bovine RF122 / ET3-1)).